A 149-amino-acid polypeptide reads, in one-letter code: NPC intracellular cholesterol transporter 2 (149 aa).

The N-terminal stretch at Met1 to Ala19 is a signal peptide. 3 disulfides stabilise this stretch: Cys27–Cys140, Cys42–Cys47, and Cys93–Cys99. A glycan (N-linked (GlcNAc...) asparagine) is linked at Asn58. Residue Lys116 is modified to N6-acetyllysine.

It belongs to the NPC2 family. In terms of assembly, interacts with NPC1 (via the second lumenal domain) in a cholestrol-dependent manner. Interacts with NUS1/NgBR, the interaction stabilizes NCP2 and regulates cholesterol trafficking. Interacts with DHDDS. Interacts with NEDD4L (via C2 domain). Interacts with NPC1L1. As to expression, expressed in kidney, spleen, liver and mammary gland, but not in testis.

Its subcellular location is the secreted. The protein resides in the endoplasmic reticulum. It is found in the lysosome. The enzyme catalyses cholesterol(in) = cholesterol(out). In terms of biological role, intracellular cholesterol transporter which acts in concert with NPC1 and plays an important role in the egress of cholesterol from the lysosomal compartment. Unesterified cholesterol that has been released from LDLs in the lumen of the late endosomes/lysosomes is transferred by NPC2 to the cholesterol-binding pocket in the N-terminal domain of NPC1. May bind and mobilize cholesterol that is associated with membranes. NPC2 binds cholesterol with a 1:1 stoichiometry. Can bind a variety of sterols, including lathosterol, desmosterol and the plant sterols stigmasterol and beta-sitosterol. The secreted form of NCP2 regulates biliary cholesterol secretion via stimulation of ABCG5/ABCG8-mediated cholesterol transport. The protein is NPC intracellular cholesterol transporter 2 of Bos taurus (Bovine).